The chain runs to 95 residues: Aspartyl/glutamyl-tRNA(Asn/Gln) amidotransferase subunit C (95 aa).

The protein belongs to the GatC family. In terms of assembly, heterotrimer of A, B and C subunits.

The enzyme catalyses L-glutamyl-tRNA(Gln) + L-glutamine + ATP + H2O = L-glutaminyl-tRNA(Gln) + L-glutamate + ADP + phosphate + H(+). The catalysed reaction is L-aspartyl-tRNA(Asn) + L-glutamine + ATP + H2O = L-asparaginyl-tRNA(Asn) + L-glutamate + ADP + phosphate + 2 H(+). Its function is as follows. Allows the formation of correctly charged Asn-tRNA(Asn) or Gln-tRNA(Gln) through the transamidation of misacylated Asp-tRNA(Asn) or Glu-tRNA(Gln) in organisms which lack either or both of asparaginyl-tRNA or glutaminyl-tRNA synthetases. The reaction takes place in the presence of glutamine and ATP through an activated phospho-Asp-tRNA(Asn) or phospho-Glu-tRNA(Gln). The protein is Aspartyl/glutamyl-tRNA(Asn/Gln) amidotransferase subunit C of Brucella melitensis biotype 2 (strain ATCC 23457).